Reading from the N-terminus, the 243-residue chain is Probable flavin-dependent thymidylate synthase (243 aa).

Positions 21-239 constitute a ThyX domain; the sequence is FEVDDFEESK…PNTYQDIPDV (219 aa). FAD contacts are provided by residues Ser-80 and 103-105; that span reads RHR. DUMP contacts are provided by residues 100–103, 113–115, and Arg-178; these read ELER and SQR. Positions 103 to 113 match the ThyX motif motif; sequence RHRHLSFSVVS. Residue 194–196 participates in FAD binding; that stretch reads NHR. Arg-205 contacts dUMP. The active-site Involved in ionization of N3 of dUMP, leading to its activation is the Arg-205.

Belongs to the thymidylate synthase ThyX family. As to quaternary structure, homotetramer. It depends on FAD as a cofactor.

The enzyme catalyses dUMP + (6R)-5,10-methylene-5,6,7,8-tetrahydrofolate + NADPH + H(+) = dTMP + (6S)-5,6,7,8-tetrahydrofolate + NADP(+). The protein operates within pyrimidine metabolism; dTTP biosynthesis. Its function is as follows. Catalyzes the reductive methylation of 2'-deoxyuridine-5'-monophosphate (dUMP) to 2'-deoxythymidine-5'-monophosphate (dTMP) while utilizing 5,10-methylenetetrahydrofolate (mTHF) as the methyl donor, and NADPH and FADH(2) as the reductant. This Mycobacterium phage L5 (Mycobacteriophage L5) protein is Probable flavin-dependent thymidylate synthase (48).